We begin with the raw amino-acid sequence, 250 residues long: MSFTVIIPARLASTRLPNKPLADLGGKPMIVRVAERAMESGASRVIVATDHADIFAACAQNNVAVQMTRTDHPSGTDRIAEVAAVLGLSDDAVIVNVQGDEPLIDPSLIAATATLISREVPMATAAHTIDDIADAFNPNVVKVVLDKQGRALYFSRATIPWHRDGFAQSREQLPTAYAPLRHIGLYAYRNSFLQAYPQLAVSPLEQIEALEQLRVLWHGVPIAVHVTPHAPAAGVDTPEDLLRVRRYFTQ.

It belongs to the KdsB family.

It is found in the cytoplasm. The enzyme catalyses 3-deoxy-alpha-D-manno-oct-2-ulosonate + CTP = CMP-3-deoxy-beta-D-manno-octulosonate + diphosphate. It participates in nucleotide-sugar biosynthesis; CMP-3-deoxy-D-manno-octulosonate biosynthesis; CMP-3-deoxy-D-manno-octulosonate from 3-deoxy-D-manno-octulosonate and CTP: step 1/1. Its pathway is bacterial outer membrane biogenesis; lipopolysaccharide biosynthesis. Its function is as follows. Activates KDO (a required 8-carbon sugar) for incorporation into bacterial lipopolysaccharide in Gram-negative bacteria. The chain is 3-deoxy-manno-octulosonate cytidylyltransferase from Herminiimonas arsenicoxydans.